Here is a 402-residue protein sequence, read N- to C-terminus: Prostaglandin E2 receptor EP1 subtype (402 aa).

Residues 1–35 are Extracellular-facing; sequence MSPCGPLNLSLAGEATTCAAPWVPNTSAVPPSGAS. Residues Asn8 and Asn25 are each glycosylated (N-linked (GlcNAc...) asparagine). The chain crosses the membrane as a helical span at residues 36–62; the sequence is PALPIFSMTLGAVSNLLALALLAQAAG. The Cytoplasmic segment spans residues 63-72; sequence RLRRRRSAAT. A helical membrane pass occupies residues 73–96; sequence FLLFVASLLATDLAGHVIPGALVL. Topologically, residues 97–111 are extracellular; that stretch reads RLYTAGRAPAGGACH. Cys110 and Cys188 are oxidised to a cystine. The chain crosses the membrane as a helical span at residues 112-133; sequence FLGGCMVFFGLCPLLLGCGMAV. Residues 134 to 155 are Cytoplasmic-facing; sequence ERCVGVTRPLLHAARVSVARAR. A helical transmembrane segment spans residues 156-177; sequence LALAAVAAVALAVALLPLARVG. The Extracellular segment spans residues 178–201; the sequence is RYELQYPGTWCFIGLGPPGGWRQA. A helical transmembrane segment spans residues 202-227; the sequence is LLAGLFASLGLVALLAALVCNTLSGL. At 228–294 the chain is on the cytoplasmic side; sequence ALLRARWRRR…ARRARAHDVE (67 aa). The segment at 238 to 266 is disordered; sequence SRRPPPASGPDSRRRWGAHGPRSASASSA. Residues 295 to 321 form a helical membrane-spanning segment; the sequence is MVGQLVGIMVVSCICWSPMLVLVALAV. The Extracellular portion of the chain corresponds to 322–332; it reads GGWSSTSLQRP. The chain crosses the membrane as a helical span at residues 333–354; it reads LFLAVRLASWNQILDPWVYILL. At 355-402 the chain is on the cytoplasmic side; it reads RQAVLRQLLRLLPPRAGAKGGPAGLGLTPSAWEASSLRSSRHSGLSHF.

This sequence belongs to the G-protein coupled receptor 1 family. Phosphorylated. In terms of tissue distribution, abundant in kidney. Lower level expression in lung, skeletal muscle and spleen, lowest expression in testis and not detected in liver brain and heart.

Its subcellular location is the cell membrane. Its function is as follows. Receptor for prostaglandin E2 (PGE2). The activity of this receptor is mediated by G(q) proteins which activate a phosphatidylinositol-calcium second messenger system. May play a role as an important modulator of renal function. Implicated the smooth muscle contractile response to PGE2 in various tissues. The polypeptide is Prostaglandin E2 receptor EP1 subtype (PTGER1) (Homo sapiens (Human)).